A 410-amino-acid polypeptide reads, in one-letter code: Probable inactive allantoicase (410 aa).

This sequence belongs to the allantoicase family.

Functionally, the function of this enzyme is unclear as allantoicase activity is not known to exist in mammals. The chain is Probable inactive allantoicase (ALLC) from Macaca fascicularis (Crab-eating macaque).